Consider the following 952-residue polypeptide: Protein translocase subunit SecA (952 aa).

Residues glutamine 104, 122–126 (GEGKT), and aspartate 512 contribute to the ATP site.

Belongs to the SecA family. Monomer and homodimer. Part of the essential Sec protein translocation apparatus which comprises SecA, SecYEG and auxiliary proteins SecDF. Other proteins may also be involved.

Its subcellular location is the cell inner membrane. The protein localises to the cytoplasm. The enzyme catalyses ATP + H2O + cellular proteinSide 1 = ADP + phosphate + cellular proteinSide 2.. In terms of biological role, part of the Sec protein translocase complex. Interacts with the SecYEG preprotein conducting channel. Has a central role in coupling the hydrolysis of ATP to the transfer of proteins into and across the cell membrane, serving as an ATP-driven molecular motor driving the stepwise translocation of polypeptide chains across the membrane. The sequence is that of Protein translocase subunit SecA from Gloeobacter violaceus (strain ATCC 29082 / PCC 7421).